The primary structure comprises 35 residues: Augerpeptide hheTx4 (35 aa).

Contains 4 disulfide bonds. Expressed by the venom duct.

It localises to the secreted. The chain is Augerpeptide hheTx4 from Hastula hectica (Sea snail).